The sequence spans 378 residues: Putative F-box only protein 15 (378 aa).

Residues 5 to 52 (KRVYRSLPFELVEEILKKTPAESLNRFKSTCKQWYGIITSKRFMYNHL) form the F-box domain.

This Arabidopsis thaliana (Mouse-ear cress) protein is Putative F-box only protein 15 (FBX15).